The chain runs to 379 residues: Queuine tRNA-ribosyltransferase (379 aa).

The active-site Proton acceptor is the aspartate 94. Substrate-binding positions include 94 to 98, aspartate 148, glutamine 191, and glycine 218; that span reads DSGGF. Positions 249-255 are RNA binding; the sequence is GVGSPDS. Aspartate 268 functions as the Nucleophile in the catalytic mechanism. The interval 273 to 277 is RNA binding; important for wobble base 34 recognition; it reads TRIAR. Residues cysteine 306, cysteine 308, cysteine 311, and histidine 337 each coordinate Zn(2+).

The protein belongs to the queuine tRNA-ribosyltransferase family. As to quaternary structure, homodimer. Within each dimer, one monomer is responsible for RNA recognition and catalysis, while the other monomer binds to the replacement base PreQ1. Zn(2+) serves as cofactor.

It catalyses the reaction 7-aminomethyl-7-carbaguanine + guanosine(34) in tRNA = 7-aminomethyl-7-carbaguanosine(34) in tRNA + guanine. It participates in tRNA modification; tRNA-queuosine biosynthesis. Catalyzes the base-exchange of a guanine (G) residue with the queuine precursor 7-aminomethyl-7-deazaguanine (PreQ1) at position 34 (anticodon wobble position) in tRNAs with GU(N) anticodons (tRNA-Asp, -Asn, -His and -Tyr). Catalysis occurs through a double-displacement mechanism. The nucleophile active site attacks the C1' of nucleotide 34 to detach the guanine base from the RNA, forming a covalent enzyme-RNA intermediate. The proton acceptor active site deprotonates the incoming PreQ1, allowing a nucleophilic attack on the C1' of the ribose to form the product. After dissociation, two additional enzymatic reactions on the tRNA convert PreQ1 to queuine (Q), resulting in the hypermodified nucleoside queuosine (7-(((4,5-cis-dihydroxy-2-cyclopenten-1-yl)amino)methyl)-7-deazaguanosine). The polypeptide is Queuine tRNA-ribosyltransferase (Bacillus cytotoxicus (strain DSM 22905 / CIP 110041 / 391-98 / NVH 391-98)).